The chain runs to 172 residues: Adenine phosphoribosyltransferase (172 aa).

The protein belongs to the purine/pyrimidine phosphoribosyltransferase family. As to quaternary structure, homodimer.

It localises to the cytoplasm. The enzyme catalyses AMP + diphosphate = 5-phospho-alpha-D-ribose 1-diphosphate + adenine. It functions in the pathway purine metabolism; AMP biosynthesis via salvage pathway; AMP from adenine: step 1/1. Its function is as follows. Catalyzes a salvage reaction resulting in the formation of AMP, that is energically less costly than de novo synthesis. The chain is Adenine phosphoribosyltransferase from Clostridium botulinum (strain Alaska E43 / Type E3).